Consider the following 363-residue polypeptide: MSPSIVFTGGGTAGHVTPNIALIKEFRKEGWNVEYIGSVSGIEKEMIEPLDIPFHGVSSGKLRRYFSLKNLLDPFKIVLGIIQSSLLFYKIKPDVVFSKGGFVAFPVVVGAWLNRIPVVAHESDMSPGLANRLSFPFVNKICLTFDAGKKYFKRQDKIEVTGTPIRQQLLTGNRMKGLELCGFNSSKPCLLVVGGSLGAGSINSCIRSALKQLTSEFQVIHLCGKGKLDSSLVGVEGYCQFEYANEELADLFAASSVVISRAGANSLYEILALGKPHILIPISSQVSRGDQIQNARYFQGLGISVVIQDELLKADVLLQAVQDVMRKKDEIDNKIKALKIESATDKIVAIIKEQAHVQTPRIV.

UDP-N-acetyl-alpha-D-glucosamine is bound by residues threonine 12–glycine 14, arginine 166, serine 196, and glutamine 291.

Belongs to the glycosyltransferase 28 family. MurG subfamily.

Its subcellular location is the cell inner membrane. The enzyme catalyses di-trans,octa-cis-undecaprenyl diphospho-N-acetyl-alpha-D-muramoyl-L-alanyl-D-glutamyl-meso-2,6-diaminopimeloyl-D-alanyl-D-alanine + UDP-N-acetyl-alpha-D-glucosamine = di-trans,octa-cis-undecaprenyl diphospho-[N-acetyl-alpha-D-glucosaminyl-(1-&gt;4)]-N-acetyl-alpha-D-muramoyl-L-alanyl-D-glutamyl-meso-2,6-diaminopimeloyl-D-alanyl-D-alanine + UDP + H(+). The protein operates within cell wall biogenesis; peptidoglycan biosynthesis. In terms of biological role, cell wall formation. Catalyzes the transfer of a GlcNAc subunit on undecaprenyl-pyrophosphoryl-MurNAc-pentapeptide (lipid intermediate I) to form undecaprenyl-pyrophosphoryl-MurNAc-(pentapeptide)GlcNAc (lipid intermediate II). The chain is UDP-N-acetylglucosamine--N-acetylmuramyl-(pentapeptide) pyrophosphoryl-undecaprenol N-acetylglucosamine transferase from Legionella pneumophila (strain Paris).